Here is a 285-residue protein sequence, read N- to C-terminus: 1,4-dihydroxy-2-naphthoyl-CoA synthase (285 aa).

Substrate contacts are provided by residues arginine 45, 84–88 (SGGDQ), tyrosine 97, 129–133 (YAIGG), threonine 155, serine 161, tyrosine 258, and lysine 273. 154-156 (QTG) provides a ligand contact to hydrogencarbonate.

Belongs to the enoyl-CoA hydratase/isomerase family. MenB subfamily. The cofactor is hydrogencarbonate.

The enzyme catalyses 2-succinylbenzoyl-CoA + H(+) = 1,4-dihydroxy-2-naphthoyl-CoA + H2O. The protein operates within quinol/quinone metabolism; 1,4-dihydroxy-2-naphthoate biosynthesis; 1,4-dihydroxy-2-naphthoate from chorismate: step 6/7. It participates in quinol/quinone metabolism; menaquinone biosynthesis. Functionally, converts o-succinylbenzoyl-CoA (OSB-CoA) to 1,4-dihydroxy-2-naphthoyl-CoA (DHNA-CoA). This is 1,4-dihydroxy-2-naphthoyl-CoA synthase from Haemophilus influenzae (strain ATCC 51907 / DSM 11121 / KW20 / Rd).